The sequence spans 127 residues: Calcitonin gene-related peptide 2 (127 aa).

The N-terminal stretch at 1–25 (MGFRKFSPFLALSILVLYQAGSLQA) is a signal peptide. Residues 26–79 (APFRSALESSPDPATLSKEDARLLLAALVQDYVQMKASELKQEQETQGSSSAAQ) constitute a propeptide that is removed on maturation. Cys83 and Cys88 are oxidised to a cystine. At Phe118 the chain carries Phenylalanine amide. A propeptide spanning residues 124–127 (DLQA) is cleaved from the precursor.

The protein belongs to the calcitonin family. Expressed in spinal cord, pituitary and thalamus.

It is found in the secreted. CALCB/CGRP2 is a peptide hormone that induces vasodilation mediated by the CALCRL-RAMP1 receptor complex. Dilates a variety of vessels including the coronary, cerebral and systemic vasculature. Its abundance in the CNS also points toward a neurotransmitter or neuromodulator role. The sequence is that of Calcitonin gene-related peptide 2 from Homo sapiens (Human).